The primary structure comprises 262 residues: 5'-nucleotidase SurE (262 aa).

A divalent metal cation contacts are provided by Asp-8, Asp-9, Ser-41, and Asn-97.

This sequence belongs to the SurE nucleotidase family. It depends on a divalent metal cation as a cofactor.

The protein resides in the cytoplasm. It catalyses the reaction a ribonucleoside 5'-phosphate + H2O = a ribonucleoside + phosphate. Functionally, nucleotidase that shows phosphatase activity on nucleoside 5'-monophosphates. This is 5'-nucleotidase SurE from Methanococcus maripaludis (strain DSM 14266 / JCM 13030 / NBRC 101832 / S2 / LL).